The sequence spans 369 residues: Probable dual-specificity RNA methyltransferase RlmN (369 aa).

Glu106 (proton acceptor) is an active-site residue. A Radical SAM core domain is found at 118 to 354 (EARRLTVCVS…VTVRRSRGQD (237 aa)). Residues Cys125 and Cys359 are joined by a disulfide bond. The [4Fe-4S] cluster site is built by Cys132, Cys136, and Cys139. S-adenosyl-L-methionine contacts are provided by residues 183–184 (GE), Ser215, 238–240 (SLH), and Asn316. Residue Cys359 is the S-methylcysteine intermediate of the active site.

It belongs to the radical SAM superfamily. RlmN family. [4Fe-4S] cluster serves as cofactor.

It localises to the cytoplasm. The catalysed reaction is adenosine(2503) in 23S rRNA + 2 reduced [2Fe-2S]-[ferredoxin] + 2 S-adenosyl-L-methionine = 2-methyladenosine(2503) in 23S rRNA + 5'-deoxyadenosine + L-methionine + 2 oxidized [2Fe-2S]-[ferredoxin] + S-adenosyl-L-homocysteine. It carries out the reaction adenosine(37) in tRNA + 2 reduced [2Fe-2S]-[ferredoxin] + 2 S-adenosyl-L-methionine = 2-methyladenosine(37) in tRNA + 5'-deoxyadenosine + L-methionine + 2 oxidized [2Fe-2S]-[ferredoxin] + S-adenosyl-L-homocysteine. Its function is as follows. Specifically methylates position 2 of adenine 2503 in 23S rRNA and position 2 of adenine 37 in tRNAs. In Salinibacter ruber (strain DSM 13855 / M31), this protein is Probable dual-specificity RNA methyltransferase RlmN.